The following is a 434-amino-acid chain: Cytochrome P450 144 (434 aa).

Substrate is bound by residues aspartate 124 and histidine 128. 4 residues coordinate heme: arginine 132, arginine 326, histidine 383, and cysteine 385.

Belongs to the cytochrome P450 family. Monomer. It depends on heme as a cofactor.

This is Cytochrome P450 144 (cyp144) from Mycobacterium tuberculosis (strain CDC 1551 / Oshkosh).